Consider the following 185-residue polypeptide: MKIINPILPIIENILGNLTALQAEGKITTQPIERVALQWYESERNILRKTTNTGREVAFRLLKEGQRLKHDDVVFISDELVIAIEILPSDVIVLSPKTLPEMARACYEIGNKHSPLFLDGDEVILPYDKPMFEWLQAAGFHPQKAERRLSQALRANSAQGHGHSHSHSHDHHGYHHHGDGHWHKH.

The interval 153-185 is disordered; it reads LRANSAQGHGHSHSHSHDHHGYHHHGDGHWHKH. A compositionally biased stretch (basic residues) spans 162–175; the sequence is GHSHSHSHDHHGYH. Positions 176–185 are enriched in basic and acidic residues; it reads HHGDGHWHKH.

The protein belongs to the UreE family.

It is found in the cytoplasm. Functionally, involved in urease metallocenter assembly. Binds nickel. Probably functions as a nickel donor during metallocenter assembly. In Haemophilus influenzae (strain PittEE), this protein is Urease accessory protein UreE.